A 132-amino-acid polypeptide reads, in one-letter code: Large ribosomal subunit protein uL14 (132 aa).

The protein belongs to the universal ribosomal protein uL14 family. The L3/L14/L24e cluster may contact the 16S rRNA in 2 intersubunit bridges. Part of the 50S ribosomal subunit. Forms a cluster with proteins L3 and L24e.

Functionally, forms part of two intersubunit bridges in the 70S ribosome. Binds to 23S rRNA. The protein is Large ribosomal subunit protein uL14 of Haloarcula marismortui (strain ATCC 43049 / DSM 3752 / JCM 8966 / VKM B-1809) (Halobacterium marismortui).